Consider the following 535-residue polypeptide: MALEAGYDYLHVAVVQCTPTQAAAVLGVLLLLAIRLAAAARSSSATSPKWKQHRLPPTPPGKLPIIGHLHLIGSHPHVSFRDLHAKYGHNGLMLVQVGAVPTIVVSTPQAAEAVLRTHDHVLASRPRNPVADIIRYNSTDVAFAPYGVYWRTARKVVNTHLLSAKMVFSKRREREEEVRLVVARIRDAAEASPGTALDMTELLGGYASDFVCRAVLGESHRKQGRNKLFRELTETSAALLGGFNVEDYFPKLADVDLFLRIICAKAKSVSKRWDSLFNELLSEYALSGGKQGDHNSEDFVHLLLSLQKDYGLTTDNIKGILVNMFEAAIETSFLVLEYSMSELMNNRHVLAKLQKEVRTATPDGRMVMEEDLSRMPYLKATIKESMRIHPPAPFLLPHFSTHDCEINGYTIPAGTRVIVNAWALARDPTCWDKAEEFFPERFLEQGRDAEVDMYGKDIRFVPFGAGRRICAGATFAIATVEIMLANLIYHFDWEMPAEMERTGAKVDMSDQFGMTLRRTQKLYLVPRIPKCVSSS.

2 helical membrane-spanning segments follow: residues 14–34 (VVQC…LLAI) and 469–489 (ICAG…NLIY). Cys-470 is a heme binding site.

Belongs to the cytochrome P450 family. It depends on heme as a cofactor.

Its subcellular location is the membrane. The enzyme catalyses 3-hydroxyindolin-2-one + reduced [NADPH--hemoprotein reductase] + O2 = 2-hydroxy-2H-1,4-benzoxazin-3(4H)-one + oxidized [NADPH--hemoprotein reductase] + H2O + H(+). Its pathway is secondary metabolite biosynthesis; 2,4-dihydroxy-1,4-benzoxazin-3-one biosynthesis; 2,4-dihydroxy-1,4-benzoxazin-3-one from indoleglycerol phosphate: step 4/5. In terms of biological role, catalyzes the conversion of 3-hydroxyindolin-2-one to 2-hydroxy-1,4-benzoxazin-3-one (HBOA). The protein is 3-hydroxyindolin-2-one monooxygenase (CYP71C1) of Zea mays (Maize).